The following is a 352-amino-acid chain: C5a anaphylatoxin chemotactic receptor 1 (352 aa).

The span at 1–11 (MDPISNDSSEI) shows a compositional bias: polar residues. A disordered region spans residues 1 to 20 (MDPISNDSSEITYDYSDGTP). Topologically, residues 1–38 (MDPISNDSSEITYDYSDGTPNPDMPADGVYIPKMEPGD) are extracellular. N-linked (GlcNAc...) asparagine glycosylation occurs at N6. Sulfotyrosine occurs at positions 13 and 15. A helical membrane pass occupies residues 39–65 (IAALIIYLAVFLVGVTGNALVVWVTAF). Residues 66–70 (EAKRT) lie on the Cytoplasmic side of the membrane. Residues 71–94 (VNAIWFLNLAVADLLSCLALPILF) traverse the membrane as a helical segment. At 95–111 (TSIVKHNHWPFGDQACI) the chain is on the extracellular side. C110 and C189 are oxidised to a cystine. Residues 112–133 (VLPSLILLNMYSSILLLATISA) form a helical membrane-spanning segment. Residues 134–154 (DRFLLVFKPIWCQKFRRPGLA) are Cytoplasmic-facing. A helical membrane pass occupies residues 155–175 (WMACGVTWVLALLLTIPSFVF). Residues 176 to 202 (RRIHKDPYSDSILCNIDYSKGPFFIEK) lie on the Extracellular side of the membrane. The chain crosses the membrane as a helical span at residues 203–228 (AIAILRLMVGFVLPLLTLNICYTFLL). Residues 229–244 (IRTWSRKATRSTKTLK) are Cytoplasmic-facing. The chain crosses the membrane as a helical span at residues 245 to 267 (VVMAVVTCFFVFWLPYQVTGVIL). The Extracellular portion of the chain corresponds to 268–284 (AWLPRSSSTFQSVERLN). Residues 285–305 (SLCVSLAYINCCVNPIIYVMA) form a helical membrane-spanning segment. Topologically, residues 306 to 352 (GQGFHGRLRRSLPSIIRNVLSEDSLGRDSKSFTRSTMDTSTQKSQAV) are cytoplasmic. Phosphoserine occurs at positions 316, 319, 326, 329, 334, 336, and 340. Residues 332–352 (RDSKSFTRSTMDTSTQKSQAV) form a disordered region. Positions 337–352 (FTRSTMDTSTQKSQAV) are enriched in polar residues.

The protein belongs to the G-protein coupled receptor 1 family. Homodimer. May also form higher-order oligomers. Interacts (when phosphorylated) with ARRB1 and ARRB2; the interaction is associated with internalization of C5aR. In terms of processing, sulfation plays a critical role in the association of C5aR with C5a, but no significant role in the ability of the receptor to transduce a signal and mobilize calcium in response to a small peptide agonist. Post-translationally, phosphorylated on serine residues in response to C5a binding, resulting in internalization of the receptor and short-term desensitization to the ligand.

It localises to the cell membrane. The protein resides in the cytoplasmic vesicle. Receptor for the chemotactic and inflammatory peptide anaphylatoxin C5a. The ligand interacts with at least two sites on the receptor: a high-affinity site on the extracellular N-terminus, and a second site in the transmembrane region which activates downstream signaling events. Receptor activation stimulates chemotaxis, granule enzyme release, intracellular calcium release and superoxide anion production. The polypeptide is C5a anaphylatoxin chemotactic receptor 1 (C5ar1) (Rattus norvegicus (Rat)).